The following is a 232-amino-acid chain: 2,3-bisphosphoglycerate-dependent phosphoglycerate mutase 1 (232 aa).

Residues 8 to 15 (RHGQSLWN), 21 to 22 (TG), arginine 58, 114 to 117 (ERYY), lysine 125, 141 to 142 (RR), and 185 to 186 (GN) each bind substrate. The Tele-phosphohistidine intermediate role is filled by histidine 9. Glutamate 114 acts as the Proton donor/acceptor in catalysis.

Belongs to the phosphoglycerate mutase family. BPG-dependent PGAM subfamily.

It carries out the reaction (2R)-2-phosphoglycerate = (2R)-3-phosphoglycerate. The protein operates within carbohydrate degradation; glycolysis; pyruvate from D-glyceraldehyde 3-phosphate: step 3/5. Functionally, catalyzes the interconversion of 2-phosphoglycerate and 3-phosphoglycerate. The chain is 2,3-bisphosphoglycerate-dependent phosphoglycerate mutase 1 from Gloeobacter violaceus (strain ATCC 29082 / PCC 7421).